The primary structure comprises 495 residues: MLLFAPTPPPSPATAHRRPGGSAASCIRCSSVRELDRSPSRPPLPPLAEAKRVVLVRHGQSTWNADGRIQGSSDFSVLTPKGESQAETSRLMLLADSFDACFTSPLARSRRTAEIIWDTRDKDLIPDYDLREIDLYSFQGLLKHEGKEKYGALFQQWQKNPSDCSIDGHYPVRELWDRAQGCWERILTHEGKSVLVVAHNAVNQALVATSLGLGTEYFRTLLQSNCGASVLDFTPQPGGRPPSVCLNRLNQTPSSPISAESSAGRKSSKRIILVCQGATQSSSEGSLGGVGYAPLNMLGVIQAQKTAELLLDLKVNSIICSPQVAAVDTATAICEVQEAAGCLGADCVPRYVEMKNLLGLEIDDAFLTKQKSLEQIVQSGWMGGMEHQKLKTLWAQSEDAWQALVNELPEDDGAESDRVVVAIGHPAIHLGLLCRCLNLTMDYMPSFHLDDGSISVIDFPDGPKGGGIVRCTNYTAHLGRWSVPITKSTENNDEF.

A compositionally biased stretch (pro residues) spans 1–12; the sequence is MLLFAPTPPPSP. The disordered stretch occupies residues 1–23; that stretch reads MLLFAPTPPPSPATAHRRPGGSA. The transit peptide at 1 to 50 directs the protein to the chloroplast; it reads MLLFAPTPPPSPATAHRRPGGSAASCIRCSSVRELDRSPSRPPLPPLAEA. His58 (tele-phosphohistidine intermediate) is an active-site residue. The active-site Proton donor/acceptor is Glu132.

Belongs to the phosphoglycerate mutase family.

The protein resides in the plastid. The protein localises to the chloroplast stroma. It carries out the reaction 2-carboxy-D-arabinitol 1-phosphate + H2O = 2-carboxy-D-arabinitol + phosphate. With respect to regulation, inactivated by oxidized glutathione (GSSG) at pH 8.0. Functionally, phosphoglycerate mutase-like protein lacking PGM activity, but having 2-carboxy-D-arabinitol 1-phosphate (CA1P) phosphatase activity. Can dephosphorylate the closely related compounds 2-carboxy-D-arabinitol 1,5-bisphosphate (CABP) and 2-carboxy-D-ribitol-1,5-bisphosphate(CRBP), and 2,3-diphosphoglycerate. Prevents the accumulation of D-glycero-2,3-pentodiulose-1,5-bisphosphate (PDBP) a potent inhibitor of ribulose-1,5-bisphosphate carboxylase (RuBisCO). PDBP is produced during the oxidation of ribulose-1,5-bisphosphate, the substrate of RuBisCO. The protein is 2-carboxy-D-arabinitol-1-phosphatase of Triticum aestivum (Wheat).